Consider the following 227-residue polypeptide: Phosphoribosylformylglycinamidine synthase subunit PurQ (227 aa).

The Glutamine amidotransferase type-1 domain occupies 3-225; sequence FAVIVFPGSN…LRNWRESHVV (223 aa). Cysteine 86 serves as the catalytic Nucleophile. Catalysis depends on residues histidine 194 and glutamate 196.

In terms of assembly, part of the FGAM synthase complex composed of 1 PurL, 1 PurQ and 2 PurS subunits.

The protein resides in the cytoplasm. It catalyses the reaction N(2)-formyl-N(1)-(5-phospho-beta-D-ribosyl)glycinamide + L-glutamine + ATP + H2O = 2-formamido-N(1)-(5-O-phospho-beta-D-ribosyl)acetamidine + L-glutamate + ADP + phosphate + H(+). The catalysed reaction is L-glutamine + H2O = L-glutamate + NH4(+). It functions in the pathway purine metabolism; IMP biosynthesis via de novo pathway; 5-amino-1-(5-phospho-D-ribosyl)imidazole from N(2)-formyl-N(1)-(5-phospho-D-ribosyl)glycinamide: step 1/2. Part of the phosphoribosylformylglycinamidine synthase complex involved in the purines biosynthetic pathway. Catalyzes the ATP-dependent conversion of formylglycinamide ribonucleotide (FGAR) and glutamine to yield formylglycinamidine ribonucleotide (FGAM) and glutamate. The FGAM synthase complex is composed of three subunits. PurQ produces an ammonia molecule by converting glutamine to glutamate. PurL transfers the ammonia molecule to FGAR to form FGAM in an ATP-dependent manner. PurS interacts with PurQ and PurL and is thought to assist in the transfer of the ammonia molecule from PurQ to PurL. This is Phosphoribosylformylglycinamidine synthase subunit PurQ from Halalkalibacterium halodurans (strain ATCC BAA-125 / DSM 18197 / FERM 7344 / JCM 9153 / C-125) (Bacillus halodurans).